The primary structure comprises 136 residues: Riboflavin kinase (136 aa).

Residue 15-20 (GLGEGR) coordinates CDP. 2 residues coordinate Mg(2+): Thr44 and Asn46. Residues Thr103 and Glu111 each contribute to the FMN site. 116–119 (YYLR) is a CDP binding site.

This sequence belongs to the archaeal riboflavin kinase family. Mg(2+) is required as a cofactor.

It carries out the reaction riboflavin + CTP = CDP + FMN + H(+). Its pathway is cofactor biosynthesis; FMN biosynthesis; FMN from riboflavin (CTP route): step 1/1. In terms of biological role, catalyzes the CTP-dependent phosphorylation of riboflavin (vitamin B2) to form flavin mononucleotide (FMN). The sequence is that of Riboflavin kinase from Sulfurisphaera tokodaii (strain DSM 16993 / JCM 10545 / NBRC 100140 / 7) (Sulfolobus tokodaii).